A 427-amino-acid polypeptide reads, in one-letter code: Methylenetetrahydrofolate--tRNA-(uracil-5-)-methyltransferase TrmFO (427 aa).

6 to 11 (GAGLAG) serves as a coordination point for FAD.

The protein belongs to the MnmG family. TrmFO subfamily. It depends on FAD as a cofactor.

The protein resides in the cytoplasm. The enzyme catalyses uridine(54) in tRNA + (6R)-5,10-methylene-5,6,7,8-tetrahydrofolate + NADH + H(+) = 5-methyluridine(54) in tRNA + (6S)-5,6,7,8-tetrahydrofolate + NAD(+). The catalysed reaction is uridine(54) in tRNA + (6R)-5,10-methylene-5,6,7,8-tetrahydrofolate + NADPH + H(+) = 5-methyluridine(54) in tRNA + (6S)-5,6,7,8-tetrahydrofolate + NADP(+). Its function is as follows. Catalyzes the folate-dependent formation of 5-methyl-uridine at position 54 (M-5-U54) in all tRNAs. The chain is Methylenetetrahydrofolate--tRNA-(uracil-5-)-methyltransferase TrmFO from Acholeplasma laidlawii (strain PG-8A).